The sequence spans 60 residues: Large ribosomal subunit protein bL33 (60 aa).

This sequence belongs to the bacterial ribosomal protein bL33 family.

This is Large ribosomal subunit protein bL33 from Chlorobium limicola (strain DSM 245 / NBRC 103803 / 6330).